We begin with the raw amino-acid sequence, 310 residues long: MTLALDIPLNDTQFSAQRKSEVLVEALPWIRRFQGRTVVVKYGGNAMVDPGLQQAFADDIVFMASVGIRPIVVHGGGPQINAMLAESATPVEFRNGLRVTSPEVMEVVRMVLVGQVGRQLVNRINAYAPLAAGMSGEDSGLLSARKSRVIVDGEQIDMGLVGDIVDVNIDLVISMLDRGQIPVIAPVSPEVDAAGRPTGQVLNVNADTAATAIAQALRAEKLVMLTNVAGIYGTWPDPHTLISEVSASDLRAMIPRLGEGMRPKAQALLDAIDGGVSSAAIVDGRIEHALLLEIFTTRGVGTMARSDDYV.

Substrate-binding positions include 76–77 (GG), Arg98, and Asn203.

The protein belongs to the acetylglutamate kinase family. ArgB subfamily.

Its subcellular location is the cytoplasm. The catalysed reaction is N-acetyl-L-glutamate + ATP = N-acetyl-L-glutamyl 5-phosphate + ADP. Its pathway is amino-acid biosynthesis; L-arginine biosynthesis; N(2)-acetyl-L-ornithine from L-glutamate: step 2/4. Its function is as follows. Catalyzes the ATP-dependent phosphorylation of N-acetyl-L-glutamate. The sequence is that of Acetylglutamate kinase from Cutibacterium acnes (strain DSM 16379 / KPA171202) (Propionibacterium acnes).